Here is a 299-residue protein sequence, read N- to C-terminus: CRISPR-associated endonuclease Cas1 3 (299 aa).

The Mn(2+) site is built by E143, H210, and D223.

The protein belongs to the CRISPR-associated endonuclease Cas1 family. In terms of assembly, homodimer, forms a heterotetramer with a Cas2 homodimer. It depends on Mg(2+) as a cofactor. The cofactor is Mn(2+).

Functionally, CRISPR (clustered regularly interspaced short palindromic repeat), is an adaptive immune system that provides protection against mobile genetic elements (viruses, transposable elements and conjugative plasmids). CRISPR clusters contain spacers, sequences complementary to antecedent mobile elements, and target invading nucleic acids. CRISPR clusters are transcribed and processed into CRISPR RNA (crRNA). Acts as a dsDNA endonuclease. Involved in the integration of spacer DNA into the CRISPR cassette. This Methanospirillum hungatei JF-1 (strain ATCC 27890 / DSM 864 / NBRC 100397 / JF-1) protein is CRISPR-associated endonuclease Cas1 3.